Here is a 264-residue protein sequence, read N- to C-terminus: Hydroxyethylthiazole kinase (264 aa).

Met40 contacts substrate. Residues Lys116 and Thr161 each contribute to the ATP site. Gly188 contributes to the substrate binding site.

This sequence belongs to the Thz kinase family. It depends on Mg(2+) as a cofactor.

It carries out the reaction 5-(2-hydroxyethyl)-4-methylthiazole + ATP = 4-methyl-5-(2-phosphooxyethyl)-thiazole + ADP + H(+). Its pathway is cofactor biosynthesis; thiamine diphosphate biosynthesis; 4-methyl-5-(2-phosphoethyl)-thiazole from 5-(2-hydroxyethyl)-4-methylthiazole: step 1/1. Functionally, catalyzes the phosphorylation of the hydroxyl group of 4-methyl-5-beta-hydroxyethylthiazole (THZ). This Staphylococcus carnosus (strain TM300) protein is Hydroxyethylthiazole kinase.